The primary structure comprises 46 residues: KECMTDETVCYIHNHNDCCGSCLCLNGPIARPWEMMVGNCKCGPKA.

4 cysteine pairs are disulfide-bonded: cysteine 3–cysteine 19, cysteine 10–cysteine 22, cysteine 18–cysteine 42, and cysteine 24–cysteine 40. Residues 31–33 (RPW) are keys region for toxin activity.

This sequence belongs to the neurotoxin 16 (SFI) family. As to expression, expressed by the venom gland.

The protein resides in the secreted. Its function is as follows. Insecticidal toxin. It inhibits insect voltage-gated sodium channels (Nav) by partially blocking the channel pore in DUM neurons from the American cockroach, not by acting as a gating modifier. The inhibition is only partially reversible after prolonged washout. In vivo, the toxin causes flaccid paralysis followed by death when injected into Heliothis virescens larvae. It also causes uncoordinated movements followed by full paralysis to sheep blowflies (Lucilia cuprina). When the toxin is fused to snowdrop lectin, it is orally active against larvae of the tomato moth (Laconobia oleracea), the rice brown planthopper (Nilaparvata lugens), and the peach-potato aphid (Myzus persicae). The protein is Mu-segestritoxin-Sf1f of Segestria florentina (Tube-web spider).